We begin with the raw amino-acid sequence, 228 residues long: RNA-free ribonuclease P (228 aa).

The protein belongs to the HARP family.

The enzyme catalyses Endonucleolytic cleavage of RNA, removing 5'-extranucleotides from tRNA precursor.. RNA-free RNase P that catalyzes the removal of the 5'-leader sequence from pre-tRNA to produce the mature 5'-terminus. The chain is RNA-free ribonuclease P from Methanopyrus kandleri (strain AV19 / DSM 6324 / JCM 9639 / NBRC 100938).